Here is a 521-residue protein sequence, read N- to C-terminus: GMC-type oxidoreductase acuG (521 aa).

Residues 14-15 (TV), 34-35 (EA), leucine 82, 90-93 (NYGL), alanine 492, and 503-504 (YQ) contribute to the FAD site.

It belongs to the GMC oxidoreductase family. The cofactor is FAD.

The protein operates within secondary metabolite biosynthesis. In terms of biological role, GMC-type oxidoreductase; part of the gene cluster that mediates the biosynthesis of aculins. The pathway begins with the synthesis of 6-methylsalicylic acid by the polyketide synthase (PKS) acuA via condensation of acetate and malonate units. The 6-methylsalicylic acid decarboxylase acuB then catalyzes the decarboxylation of 6-methylsalicylic acid to yield m-cresol (also known as 3-methylphenol). These first reactions occur in the cytosol. The intermediate m-cresol is then transported into the endoplasmic reticulum where the cytochrome P450 monooxygenase acuC converts it to m-hydroxybenzyl alcohol, which is further converted to gentisyl alcohol by the cytochrome P450 monooxygenase acuD. Gentisyl alcohol is further oxidized by the oxidoreductase acuE that probably catalyzes hydroxylation of the aromatic ring. The aromatic system might then be opened by oxidation through a Baeyer-Villiger type of oxidation, which could be catalyzed by acuF, with the carboxylic acid at C-1 subsequently reduced to an aldehyde by acuG. Subsequently, a hemiacetal is formed, before the dehydrogenase acuH would reduce the double bond between C-4 and C-6. Finally, keto-enol tautomerism results in formation of aculinic acid, which exists as two diastereomers (both R/S configurations at C-1) by non-enzymatic hemiacetal formation. The carboxypeptidase acuI could be involved in the linking of aculinic acid to an aculene A moiety produced by the aculene biosynthesis cluster and which leads to the production of aculin A. AcuI may also be involved in the attachment of proline to aculinic acid to form epi-aculins A and B. This Aspergillus aculeatus (strain ATCC 16872 / CBS 172.66 / WB 5094) protein is GMC-type oxidoreductase acuG.